The chain runs to 115 residues: Ribosomal protein uS4-like (115 aa).

The protein belongs to the universal ribosomal protein uS4 family.

The protein is Ribosomal protein uS4-like of Azoarcus sp. (strain BH72).